The sequence spans 385 residues: Aliphatic amidase expression-regulating protein (385 aa).

Homodimer. Forms a complex with AmiR.

Functionally, negatively regulates the expression of the aliphatic amidase operon. AmiC functions by inhibiting the action of AmiR at the protein level. It exhibits protein kinase activity. This is Aliphatic amidase expression-regulating protein (amiC) from Pseudomonas aeruginosa (strain ATCC 15692 / DSM 22644 / CIP 104116 / JCM 14847 / LMG 12228 / 1C / PRS 101 / PAO1).